We begin with the raw amino-acid sequence, 318 residues long: Aspartate carbamoyltransferase catalytic subunit (318 aa).

2 residues coordinate carbamoyl phosphate: Arg-64 and Thr-65. Lys-92 contacts L-aspartate. Carbamoyl phosphate is bound by residues Arg-114, His-142, and Gln-145. L-aspartate is bound by residues Arg-175 and Arg-229. Residues Gly-270 and Pro-271 each contribute to the carbamoyl phosphate site.

This sequence belongs to the aspartate/ornithine carbamoyltransferase superfamily. ATCase family. In terms of assembly, heterododecamer (2C3:3R2) of six catalytic PyrB chains organized as two trimers (C3), and six regulatory PyrI chains organized as three dimers (R2).

The catalysed reaction is carbamoyl phosphate + L-aspartate = N-carbamoyl-L-aspartate + phosphate + H(+). It participates in pyrimidine metabolism; UMP biosynthesis via de novo pathway; (S)-dihydroorotate from bicarbonate: step 2/3. In terms of biological role, catalyzes the condensation of carbamoyl phosphate and aspartate to form carbamoyl aspartate and inorganic phosphate, the committed step in the de novo pyrimidine nucleotide biosynthesis pathway. This Rhodospirillum centenum (strain ATCC 51521 / SW) protein is Aspartate carbamoyltransferase catalytic subunit.